The chain runs to 339 residues: Ureidoglycine carbamoyltransferase (339 aa).

The protein belongs to the aspartate/ornithine carbamoyltransferase superfamily. In terms of assembly, homodimer.

The catalysed reaction is (S)-2-ureidoglycine + carbamoyl phosphate = allantoate + phosphate + H(+). The protein operates within purine metabolism. In terms of biological role, catalyzes the phosphorolysis of allantoate to ureidoglycine and carbamoyl phosphate. Is likely involved in a purine degradation pathway. The polypeptide is Ureidoglycine carbamoyltransferase (Rubrobacter xylanophilus (strain DSM 9941 / JCM 11954 / NBRC 16129 / PRD-1)).